A 326-amino-acid chain; its full sequence is Pyruvate dehydrogenase E1 component subunit beta (326 aa).

Glutamate 59 provides a ligand contact to thiamine diphosphate.

As to quaternary structure, heterodimer of an alpha and a beta chain. Thiamine diphosphate is required as a cofactor.

It carries out the reaction N(6)-[(R)-lipoyl]-L-lysyl-[protein] + pyruvate + H(+) = N(6)-[(R)-S(8)-acetyldihydrolipoyl]-L-lysyl-[protein] + CO2. In terms of biological role, the pyruvate dehydrogenase complex catalyzes the overall conversion of pyruvate to acetyl-CoA and CO(2). It contains multiple copies of three enzymatic components: pyruvate dehydrogenase (E1), dihydrolipoamide acetyltransferase (E2) and lipoamide dehydrogenase (E3). This is Pyruvate dehydrogenase E1 component subunit beta (pdhB) from Rickettsia conorii (strain ATCC VR-613 / Malish 7).